Here is a 220-residue protein sequence, read N- to C-terminus: Adenylate kinase (220 aa).

10–15 (GAGKGT) is an ATP binding site. Residues 30-59 (STGDMLRAAVKAGSPLGVEAKGYMDAGKLV) form an NMP region. Residues threonine 31, arginine 36, 57–59 (KLV), 85–88 (GFPR), and glutamine 92 each bind AMP. The interval 122–159 (GRRTHAASGRTYHVKFNPPKVEGQDDVTGEPLIQRDDD) is LID. ATP is bound by residues arginine 123 and 132 to 133 (TY). AMP is bound by residues arginine 156 and arginine 167. Position 206 (glycine 206) interacts with ATP.

It belongs to the adenylate kinase family. Monomer.

The protein resides in the cytoplasm. It catalyses the reaction AMP + ATP = 2 ADP. The protein operates within purine metabolism; AMP biosynthesis via salvage pathway; AMP from ADP: step 1/1. Its function is as follows. Catalyzes the reversible transfer of the terminal phosphate group between ATP and AMP. Plays an important role in cellular energy homeostasis and in adenine nucleotide metabolism. In Burkholderia vietnamiensis (strain G4 / LMG 22486) (Burkholderia cepacia (strain R1808)), this protein is Adenylate kinase.